The primary structure comprises 221 residues: Ribosome maturation factor RimM (221 aa).

The disordered stretch occupies residues 1-23 (MTERKQGAAAPRPLNRPQGESPK). The region spanning 144-221 (ENEFYWVDLI…RIVVDWGLDY (78 aa)) is the PRC barrel domain.

The protein belongs to the RimM family. In terms of assembly, binds ribosomal protein uS19.

The protein resides in the cytoplasm. Functionally, an accessory protein needed during the final step in the assembly of 30S ribosomal subunit, possibly for assembly of the head region. Essential for efficient processing of 16S rRNA. May be needed both before and after RbfA during the maturation of 16S rRNA. It has affinity for free ribosomal 30S subunits but not for 70S ribosomes. This chain is Ribosome maturation factor RimM, found in Cupriavidus pinatubonensis (strain JMP 134 / LMG 1197) (Cupriavidus necator (strain JMP 134)).